Reading from the N-terminus, the 510-residue chain is 11S globulin (510 aa).

Residues 1–23 form the signal peptide; it reads MAKPILLSISLCLVALVNGCLAQ. Disulfide bonds link C35–C68 and C111–C325. In terms of domain architecture, Cupin type-1 1 spans 38–257; sequence KRLVALEPSN…AFNVDTETAR (220 aa). 2 disordered regions span residues 194 to 239 and 284 to 319; these read AGNP…VFSG and WSREEQEREERKERERERESESERRQSRRGGRDDNG. Residues 284-318 are compositionally biased toward basic and acidic residues; that stretch reads WSREEQEREERKERERERESESERRQSRRGGRDDN. The NGXEET; peptidase recognition motif signature appears at 318–323; the sequence is NGLEET. One can recognise a Cupin type-1 2 domain in the interval 331–480; that stretch reads ENIGDPSRAD…ALQIPREDAR (150 aa). Residues 487–510 are disordered; that stretch reads QESTLVRSRPSSSRSSRSERRAEV.

This sequence belongs to the 11S seed storage protein (globulins) family. In terms of assembly, homohexamer. Can assemble in other multimeric configurations. Post-translationally, proteolytically processed from a single precursor to produce an acidic and a basic chain that are linked by a disulfide bond. In terms of tissue distribution, expressed in endosperm of the seed.

Functionally, seed storage protein. The chain is 11S globulin from Juglans nigra (Black walnut).